A 77-amino-acid polypeptide reads, in one-letter code: Sec-independent protein translocase protein TatA (77 aa).

The chain crosses the membrane as a helical span at residues 1-21; sequence MGSFSIWHWLVVLAIVVLVFG. Positions 40 to 77 are disordered; that stretch reads KEGMKGAEEENTQPPPSHQQVTGHSIKSEIEEKDQTKV. Positions 65–77 are enriched in basic and acidic residues; sequence IKSEIEEKDQTKV.

It belongs to the TatA/E family. As to quaternary structure, the Tat system comprises two distinct complexes: a TatABC complex, containing multiple copies of TatA, TatB and TatC subunits, and a separate TatA complex, containing only TatA subunits. Substrates initially bind to the TatABC complex, which probably triggers association of the separate TatA complex to form the active translocon.

Its subcellular location is the cell inner membrane. Part of the twin-arginine translocation (Tat) system that transports large folded proteins containing a characteristic twin-arginine motif in their signal peptide across membranes. TatA could form the protein-conducting channel of the Tat system. The polypeptide is Sec-independent protein translocase protein TatA (Nitrosomonas eutropha (strain DSM 101675 / C91 / Nm57)).